We begin with the raw amino-acid sequence, 427 residues long: Dihydroorotase (427 aa).

Zn(2+) contacts are provided by His-58 and His-60. Residues 60–62 (HYR) and Asn-92 contribute to the substrate site. 3 residues coordinate Zn(2+): Asp-150, His-177, and His-230. Asn-276 is a binding site for substrate. Asp-303 is a Zn(2+) binding site. Asp-303 is a catalytic residue. Substrate is bound by residues His-307 and 321–322 (FG).

This sequence belongs to the metallo-dependent hydrolases superfamily. DHOase family. Class I DHOase subfamily. Zn(2+) is required as a cofactor.

It carries out the reaction (S)-dihydroorotate + H2O = N-carbamoyl-L-aspartate + H(+). Its pathway is pyrimidine metabolism; UMP biosynthesis via de novo pathway; (S)-dihydroorotate from bicarbonate: step 3/3. Its function is as follows. Catalyzes the reversible cyclization of carbamoyl aspartate to dihydroorotate. This Lactobacillus leichmannii protein is Dihydroorotase.